A 367-amino-acid polypeptide reads, in one-letter code: tRNA-specific 2-thiouridylase MnmA (367 aa).

ATP is bound by residues 13–20 and Met-39; that span reads GLSGGVDS. Positions 99-101 are interaction with target base in tRNA; it reads NPD. Cys-104 (nucleophile) is an active-site residue. The cysteines at positions 104 and 200 are disulfide-linked. Gly-128 is a binding site for ATP. The tract at residues 150 to 152 is interaction with tRNA; it reads KDQ. Residue Cys-200 is the Cysteine persulfide intermediate of the active site. Residues 307–308 are interaction with tRNA; it reads RY.

This sequence belongs to the MnmA/TRMU family.

It localises to the cytoplasm. It carries out the reaction S-sulfanyl-L-cysteinyl-[protein] + uridine(34) in tRNA + AH2 + ATP = 2-thiouridine(34) in tRNA + L-cysteinyl-[protein] + A + AMP + diphosphate + H(+). Catalyzes the 2-thiolation of uridine at the wobble position (U34) of tRNA, leading to the formation of s(2)U34. This is tRNA-specific 2-thiouridylase MnmA from Neisseria meningitidis serogroup A / serotype 4A (strain DSM 15465 / Z2491).